Here is a 354-residue protein sequence, read N- to C-terminus: Chorismate synthase (354 aa).

Residue Arg-48 participates in NADP(+) binding. FMN contacts are provided by residues 125 to 127, Gly-277, 292 to 296, and Arg-318; these read RAS and KPIPS.

It belongs to the chorismate synthase family. In terms of assembly, homotetramer. The cofactor is FMNH2.

It catalyses the reaction 5-O-(1-carboxyvinyl)-3-phosphoshikimate = chorismate + phosphate. The protein operates within metabolic intermediate biosynthesis; chorismate biosynthesis; chorismate from D-erythrose 4-phosphate and phosphoenolpyruvate: step 7/7. Catalyzes the anti-1,4-elimination of the C-3 phosphate and the C-6 proR hydrogen from 5-enolpyruvylshikimate-3-phosphate (EPSP) to yield chorismate, which is the branch point compound that serves as the starting substrate for the three terminal pathways of aromatic amino acid biosynthesis. This reaction introduces a second double bond into the aromatic ring system. This is Chorismate synthase from Nitratidesulfovibrio vulgaris (strain ATCC 29579 / DSM 644 / CCUG 34227 / NCIMB 8303 / VKM B-1760 / Hildenborough) (Desulfovibrio vulgaris).